The primary structure comprises 1211 residues: Homeodomain-interacting protein kinase 1 (1211 aa).

Residue lysine 25 forms a Glycyl lysine isopeptide (Lys-Gly) (interchain with G-Cter in SUMO); alternate linkage. Lysine 25 is covalently cross-linked (Glycyl lysine isopeptide (Lys-Gly) (interchain with G-Cter in SUMO2); alternate). Residues lysine 120 and lysine 124 each participate in a glycyl lysine isopeptide (Lys-Gly) (interchain with G-Cter in SUMO2) cross-link. One can recognise a Protein kinase domain in the interval 190-518; that stretch reads YEVLEFLGRG…PLKTLNHQFV (329 aa). Residues 196-204 and lysine 219 contribute to the ATP site; that span reads LGRGTFGQV. The Proton acceptor role is filled by aspartate 315. Positions 835–856 are disordered; sequence QQQSSSLPSRKNKQSAPVSSTS. Residues 844 to 847 carry the Nuclear localization signal 1 (NLS1) motif; that stretch reads RKNK. At serine 872 the chain carries Phosphoserine. The segment at 885–1094 is interaction with TP53; the sequence is PVQDQHQPII…FQHGSPLHST (210 aa). The interval 891-998 is required for localization to nuclear speckles; sequence QPIIIPDTPS…PLKTQLGDCT (108 aa). An SUMO interaction motifs (SIM); required for nuclear localization and kinase activity region spans residues 902–926; that stretch reads PVSVITIRSDTDEEEDNKFKPSSSS. Lysine 991 participates in a covalent cross-link: Glycyl lysine isopeptide (Lys-Gly) (interchain with G-Cter in SUMO2). Disordered stretches follow at residues 1002-1023, 1047-1070, and 1085-1105; these read QASGLLSSSKTKPVASVSGQSS, LSQNQQSSSASTSQERSSNPAPRR, and FQHGSPLHSTGHPHLAPAPAH. 2 stretches are compositionally biased toward low complexity: residues 1048–1064 and 1096–1105; these read SQNQQSSSASTSQERSS and HPHLAPAPAH. Serine 1201 carries the phosphoserine modification. A Glycyl lysine isopeptide (Lys-Gly) (interchain with G-Cter in SUMO) cross-link involves residue lysine 1204.

Belongs to the protein kinase superfamily. CMGC Ser/Thr protein kinase family. HIPK subfamily. As to quaternary structure, interacts with Nkx1-2, Nkx2-5, MYB, PARK7, DAXX and p53/TP53. Part of a cytoplasmic complex made of HIPK1, DAB2IP and MAP3K5 in response to TNF. This complex formation promotes MAP3K5-JNK activation and subsequent apoptosis. Post-translationally, phosphorylated and activated by JNK1. Autophosphorylated. In terms of processing, sumoylated. When conjugated it is directed to nuclear speckles. SENP1-mediated desumoylation is mediated by TNF in response to stress stimuli, triggering transient translocation from nucleus to cytoplasm.

It is found in the nucleus. Its subcellular location is the cytoplasm. It localises to the nucleus speckle. It carries out the reaction L-seryl-[protein] + ATP = O-phospho-L-seryl-[protein] + ADP + H(+). The catalysed reaction is L-threonyl-[protein] + ATP = O-phospho-L-threonyl-[protein] + ADP + H(+). Serine/threonine-protein kinase involved in transcription regulation and TNF-mediated cellular apoptosis. Plays a role as a corepressor for homeodomain transcription factors. Phosphorylates DAXX and MYB. Phosphorylates DAXX in response to stress, and mediates its translocation from the nucleus to the cytoplasm. Inactivates MYB transcription factor activity by phosphorylation. Prevents MAP3K5-JNK activation in the absence of TNF. TNF triggers its translocation to the cytoplasm in response to stress stimuli, thus activating nuclear MAP3K5-JNK by derepression and promoting apoptosis. May be involved in anti-oxidative stress responses. Involved in the regulation of eye size, lens formation and retinal lamination during late embryogenesis. Promotes angiogenesis and to be involved in erythroid differentiation. May be involved in malignant squamous cell tumor formation. Phosphorylates PAGE4 at 'Thr-51' which is critical for the ability of PAGE4 to potentiate the transcriptional activator activity of JUN. This chain is Homeodomain-interacting protein kinase 1, found in Rattus norvegicus (Rat).